The primary structure comprises 117 residues: Ribosome-binding factor A (117 aa).

Belongs to the RbfA family. In terms of assembly, monomer. Binds 30S ribosomal subunits, but not 50S ribosomal subunits or 70S ribosomes.

The protein resides in the cytoplasm. One of several proteins that assist in the late maturation steps of the functional core of the 30S ribosomal subunit. Associates with free 30S ribosomal subunits (but not with 30S subunits that are part of 70S ribosomes or polysomes). Required for efficient processing of 16S rRNA. May interact with the 5'-terminal helix region of 16S rRNA. The polypeptide is Ribosome-binding factor A (Lactiplantibacillus plantarum (strain ATCC BAA-793 / NCIMB 8826 / WCFS1) (Lactobacillus plantarum)).